The primary structure comprises 102 residues: MSKIKIKLKSFDADLIEEVSKKFVAFAKSKDIKMSGPIPLPTKIERITILRSVHVNKDSREQFESRTHKRLIIFENLDKKMLDALKRQEISTGVQVEIKEIN.

The protein belongs to the universal ribosomal protein uS10 family. In terms of assembly, part of the 30S ribosomal subunit.

In terms of biological role, involved in the binding of tRNA to the ribosomes. In Mycoplasma mobile (strain ATCC 43663 / 163K / NCTC 11711) (Mesomycoplasma mobile), this protein is Small ribosomal subunit protein uS10.